A 71-amino-acid chain; its full sequence is uncharacterized protein (71 aa).

This is an uncharacterized protein from Vaccinia virus (strain Copenhagen) (VACV).